Here is a 630-residue protein sequence, read N- to C-terminus: 1-deoxy-D-xylulose-5-phosphate synthase (630 aa).

Residues H75 and 116–118 each bind thiamine diphosphate; that span reads GHS. Position 147 (D147) interacts with Mg(2+). Thiamine diphosphate is bound by residues 148 to 149, N176, Y287, and E367; that span reads GA. Mg(2+) is bound at residue N176.

This sequence belongs to the transketolase family. DXPS subfamily. Homodimer. Mg(2+) serves as cofactor. Thiamine diphosphate is required as a cofactor.

The catalysed reaction is D-glyceraldehyde 3-phosphate + pyruvate + H(+) = 1-deoxy-D-xylulose 5-phosphate + CO2. The protein operates within metabolic intermediate biosynthesis; 1-deoxy-D-xylulose 5-phosphate biosynthesis; 1-deoxy-D-xylulose 5-phosphate from D-glyceraldehyde 3-phosphate and pyruvate: step 1/1. Catalyzes the acyloin condensation reaction between C atoms 2 and 3 of pyruvate and glyceraldehyde 3-phosphate to yield 1-deoxy-D-xylulose-5-phosphate (DXP). The protein is 1-deoxy-D-xylulose-5-phosphate synthase of Treponema pallidum (strain Nichols).